The primary structure comprises 602 residues: Elongation factor 4 (602 aa).

Residues Asn-2–Arg-184 form the tr-type G domain. Residues Asp-14–Thr-19 and Asn-131–Asp-134 contribute to the GTP site.

It belongs to the TRAFAC class translation factor GTPase superfamily. Classic translation factor GTPase family. LepA subfamily.

Its subcellular location is the cell inner membrane. The catalysed reaction is GTP + H2O = GDP + phosphate + H(+). Its function is as follows. Required for accurate and efficient protein synthesis under certain stress conditions. May act as a fidelity factor of the translation reaction, by catalyzing a one-codon backward translocation of tRNAs on improperly translocated ribosomes. Back-translocation proceeds from a post-translocation (POST) complex to a pre-translocation (PRE) complex, thus giving elongation factor G a second chance to translocate the tRNAs correctly. Binds to ribosomes in a GTP-dependent manner. The protein is Elongation factor 4 of Paracidovorax citrulli (strain AAC00-1) (Acidovorax citrulli).